Reading from the N-terminus, the 151-residue chain is Nucleoside diphosphate kinase (151 aa).

Residues Lys-10, Phe-58, Arg-86, Thr-92, Arg-103, and Asn-113 each coordinate ATP. His-116 serves as the catalytic Pros-phosphohistidine intermediate.

Belongs to the NDK family. As to quaternary structure, homotetramer. The cofactor is Mg(2+).

The protein resides in the cytoplasm. The catalysed reaction is dZDP + ATP = dZTP + ADP. It catalyses the reaction a 2'-deoxyribonucleoside 5'-diphosphate + ATP = a 2'-deoxyribonucleoside 5'-triphosphate + ADP. The enzyme catalyses a ribonucleoside 5'-diphosphate + ATP = a ribonucleoside 5'-triphosphate + ADP. It participates in purine metabolism. In terms of biological role, major role in the synthesis of nucleoside triphosphates other than ATP. The ATP gamma phosphate is transferred to the NDP beta phosphate via a ping-pong mechanism, using a phosphorylated active-site intermediate. Its function is as follows. (Microbial infection) Catalyzes the phosphorylation of dZDP to dZTP, when the bacterium is infected by a phage that produces the substrate for the synthesis of dZTP (2- amino-2'-deoxyadenosine 5'-triphosphate), which is then used by the phage as a DNA polymerase substrate. In Synechococcus sp. (strain CC9902), this protein is Nucleoside diphosphate kinase.